A 324-amino-acid polypeptide reads, in one-letter code: 33 kDa ribonucleoprotein, chloroplastic (324 aa).

The transit peptide at 1-71 directs the protein to the chloroplast; it reads MSGCCFSFAA…YRSSIFLSTC (71 aa). RRM domains follow at residues 114 to 192 and 217 to 296; these read GRLY…FPEV and HKLY…AGQK. Residues 294–324 are disordered; the sequence is GQKAPVSSPPVVETSPENDSDNSELLSSLSS. Positions 298–308 are enriched in low complexity; sequence PVSSPPVVETS.

Its subcellular location is the plastid. It localises to the chloroplast. Could be involved in splicing and/or processing of chloroplast RNA's. The sequence is that of 33 kDa ribonucleoprotein, chloroplastic from Nicotiana sylvestris (Wood tobacco).